Consider the following 232-residue polypeptide: Flagellar L-ring protein (232 aa).

Residues methionine 1–glycine 21 form the signal peptide. The N-palmitoyl cysteine moiety is linked to residue cysteine 22. Cysteine 22 is lipidated: S-diacylglycerol cysteine.

This sequence belongs to the FlgH family. As to quaternary structure, the basal body constitutes a major portion of the flagellar organelle and consists of four rings (L,P,S, and M) mounted on a central rod.

The protein localises to the cell outer membrane. Its subcellular location is the bacterial flagellum basal body. In terms of biological role, assembles around the rod to form the L-ring and probably protects the motor/basal body from shearing forces during rotation. This Salmonella gallinarum (strain 287/91 / NCTC 13346) protein is Flagellar L-ring protein.